A 200-amino-acid chain; its full sequence is NADH-quinone oxidoreductase subunit C (200 aa).

Belongs to the complex I 30 kDa subunit family. In terms of assembly, NDH-1 is composed of 14 different subunits. Subunits NuoB, C, D, E, F, and G constitute the peripheral sector of the complex.

The protein localises to the cell inner membrane. It catalyses the reaction a quinone + NADH + 5 H(+)(in) = a quinol + NAD(+) + 4 H(+)(out). Functionally, NDH-1 shuttles electrons from NADH, via FMN and iron-sulfur (Fe-S) centers, to quinones in the respiratory chain. The immediate electron acceptor for the enzyme in this species is believed to be ubiquinone. Couples the redox reaction to proton translocation (for every two electrons transferred, four hydrogen ions are translocated across the cytoplasmic membrane), and thus conserves the redox energy in a proton gradient. The sequence is that of NADH-quinone oxidoreductase subunit C from Rhizobium rhizogenes (strain K84 / ATCC BAA-868) (Agrobacterium radiobacter).